The chain runs to 550 residues: Copine-F (550 aa).

C2 domains are found at residues 1–115 (MAET…RLIG) and 123–246 (ITGK…PIIN). Residues 296–521 (DLMVAIDCTE…DFQNEILRKL (226 aa)) enclose the VWFA domain.

Belongs to the copine family.

This chain is Copine-F (cpnF), found in Dictyostelium discoideum (Social amoeba).